Reading from the N-terminus, the 137-residue chain is Small ribosomal subunit protein uS12 (137 aa).

Disordered stretches follow at residues 1 to 22 (MPTINQLVRKPRKSKVSKSKSP) and 35 to 57 (ATNNAAPQKRGVATRVGTMTPKK). The span at 9 to 18 (RKPRKSKVSK) shows a compositional bias: basic residues. A 3-methylthioaspartic acid modification is found at aspartate 102.

It belongs to the universal ribosomal protein uS12 family. In terms of assembly, part of the 30S ribosomal subunit. Contacts proteins S8 and S17. May interact with IF1 in the 30S initiation complex.

Functionally, with S4 and S5 plays an important role in translational accuracy. Interacts with and stabilizes bases of the 16S rRNA that are involved in tRNA selection in the A site and with the mRNA backbone. Located at the interface of the 30S and 50S subunits, it traverses the body of the 30S subunit contacting proteins on the other side and probably holding the rRNA structure together. The combined cluster of proteins S8, S12 and S17 appears to hold together the shoulder and platform of the 30S subunit. This chain is Small ribosomal subunit protein uS12, found in Leuconostoc mesenteroides subsp. mesenteroides (strain ATCC 8293 / DSM 20343 / BCRC 11652 / CCM 1803 / JCM 6124 / NCDO 523 / NBRC 100496 / NCIMB 8023 / NCTC 12954 / NRRL B-1118 / 37Y).